The chain runs to 286 residues: MAGIYAVSIKGHASAIFNRQEKEISTGRVWEVMKKIMSLKPTRVIMSYSLLRSALDKSRQLTQEEYNIMQLILDGCVKTLEPVAASGICIDVNLGKCTKHTIPFGITNNDVGHVSVVMTLPFLEEGCYNIGACFDGRLSKSRSDASHYAVDVSLEIYLKSLSRDEAEEQISKGTSVYPFKINHPTYFEDETDTSDGESLSGRASSDDGPEDGGHGHGDKNNEKNSGKVVRKRKSRKEIDVGRFKMVKDNIINTRSGLLKSMRGTGHRKHRTQEITEGYNYGDKDAE.

Disordered stretches follow at residues 187–234 (FEDE…KRKS) and 257–286 (LLKS…KDAE). A compositionally biased stretch (basic and acidic residues) spans 211–225 (DGGHGHGDKNNEKNS).

In terms of biological role, this protein is probably a component of the active polymerase. It may function in template binding. In Aphis (Hairy beggarticks), this protein is Phosphoprotein (P).